The chain runs to 863 residues: Leucine-rich repeat and death domain-containing protein 1 (863 aa).

Disordered regions lie at residues 1–37 (MSEK…KETS) and 51–100 (SSNQ…SQSL). Positions 88-100 (SETSTRTETSQSL) are enriched in low complexity. LRR repeat units lie at residues 143 to 166 (CKDN…ILKI), 167 to 189 (KYVK…DSGD), 190 to 213 (LLGL…IQLL), 214 to 236 (HNLR…ISQL), 238 to 259 (NIRQ…LECL), 260 to 282 (GNLE…LPSL), 284 to 305 (YLRV…LCFL), 306 to 328 (PKLI…IREL), 329 to 351 (KNLE…IFQL), 353 to 374 (KIKE…IENF), 375 to 397 (RELR…ICCC), 398 to 420 (AMLE…IHKL), 422 to 443 (NLRK…ISHL), 445 to 466 (NICS…IKNC), 468 to 489 (KIIK…LCAL), 490 to 513 (DSLY…SFSK), 515 to 535 (LLHL…FCSL), 536 to 558 (INLK…ISNM), 560 to 581 (SLHV…LCTL), 582 to 604 (ENLR…ICNL), 606 to 627 (RIQK…LCQL), 630 to 653 (LEQL…LSNM), 654 to 676 (TQLK…IGEL), 678 to 699 (NLVS…LLSL), 700 to 722 (NDLQ…IYNL), and 724 to 745 (SLKE…ICKG). Residues 767–855 (EKIFKIVANN…EIMDKITALN (89 aa)) form the Death domain. An LRR 27 repeat occupies 856 to 863 (LFTRAIKF).

The protein is Leucine-rich repeat and death domain-containing protein 1 (LRRD1) of Macaca fascicularis (Crab-eating macaque).